A 67-amino-acid polypeptide reads, in one-letter code: ATP synthase protein 8 (67 aa).

Residues threonine 8–phenylalanine 24 traverse the membrane as a helical segment. Lysine 54 bears the N6-acetyllysine; alternate mark. N6-succinyllysine; alternate is present on lysine 54. Residue lysine 57 is modified to N6-acetyllysine.

Belongs to the ATPase protein 8 family. F-type ATPases have 2 components, CF(1) - the catalytic core - and CF(0) - the membrane proton channel. Component of an ATP synthase complex composed of ATP5PB, ATP5MC1, ATP5F1E, ATP5PD, ATP5ME, ATP5PF, ATP5MF, MT-ATP6, MT-ATP8, ATP5F1A, ATP5F1B, ATP5F1D, ATP5F1C, ATP5PO, ATP5MG, ATP5MK and ATP5MJ. Interacts with PRICKLE3.

Its subcellular location is the mitochondrion membrane. Functionally, mitochondrial membrane ATP synthase (F(1)F(0) ATP synthase or Complex V) produces ATP from ADP in the presence of a proton gradient across the membrane which is generated by electron transport complexes of the respiratory chain. F-type ATPases consist of two structural domains, F(1) - containing the extramembraneous catalytic core and F(0) - containing the membrane proton channel, linked together by a central stalk and a peripheral stalk. During catalysis, ATP synthesis in the catalytic domain of F(1) is coupled via a rotary mechanism of the central stalk subunits to proton translocation. Part of the complex F(0) domain. Minor subunit located with subunit a in the membrane. The protein is ATP synthase protein 8 (MT-ATP8) of Rhinoceros unicornis (Greater Indian rhinoceros).